The primary structure comprises 427 residues: 3-isopropylmalate dehydratase large subunit (427 aa).

3 residues coordinate [4Fe-4S] cluster: Cys308, Cys368, and Cys371.

This sequence belongs to the aconitase/IPM isomerase family. LeuC type 2 subfamily. In terms of assembly, heterodimer of LeuC and LeuD. The cofactor is [4Fe-4S] cluster.

The catalysed reaction is (2R,3S)-3-isopropylmalate = (2S)-2-isopropylmalate. Its pathway is amino-acid biosynthesis; L-leucine biosynthesis; L-leucine from 3-methyl-2-oxobutanoate: step 2/4. Catalyzes the isomerization between 2-isopropylmalate and 3-isopropylmalate, via the formation of 2-isopropylmaleate. The polypeptide is 3-isopropylmalate dehydratase large subunit (Geotalea uraniireducens (strain Rf4) (Geobacter uraniireducens)).